The sequence spans 79 residues: Major outer membrane lipoprotein Lpp 2 (79 aa).

The signal sequence occupies residues Met-1–Gly-21. A lipid anchor (N-palmitoyl cysteine) is attached at Cys-22. A lipid anchor (S-diacylglycerol cysteine) is attached at Cys-22. Repeats lie at residues Asn-25–Val-35 and Ser-39–Val-49. A coiled-coil region spans residues Ile-28–Arg-69. An N6-murein peptidoglycan lysine modification is found at Lys-79.

It belongs to the Lpp family. As to quaternary structure, homotrimer.

The protein localises to the cell outer membrane. Its subcellular location is the secreted. The protein resides in the cell wall. In terms of biological role, a highly abundant outer membrane lipoprotein that controls the distance between the inner and outer membranes. The only protein known to be covalently linked to the peptidoglycan network (PGN). Also non-covalently binds the PGN. The link between the cell outer membrane and PGN contributes to maintenance of the structural and functional integrity of the cell envelope, and maintains the correct distance between the PGN and the outer membrane. In Salmonella typhi, this protein is Major outer membrane lipoprotein Lpp 2.